The following is a 247-amino-acid chain: MSQVNMRDMLKAGVHFGHQTRYWNPKMGKYIFGARNKIHIINLEKTLPMFNEALTFVERLASGKNKILFVGTKRSAGKIVAEEAARCGSPYVDHRWLGGMLTNFKTIRQSIKRLRELEVQSEDGTFAKLTKKEALMRTRDLEKLDRSLGGIKDMGGLPDALFVIDVDHERIAITEANKLGIPVIGVVDTNSSPEGVDYIIPGNDDAIRAIQLYMGSMADAVIRGRNNVAGGTDVFVEEAPAAAAVEG.

The protein belongs to the universal ribosomal protein uS2 family.

In Pseudomonas savastanoi pv. phaseolicola (strain 1448A / Race 6) (Pseudomonas syringae pv. phaseolicola (strain 1448A / Race 6)), this protein is Small ribosomal subunit protein uS2.